Here is a 287-residue protein sequence, read N- to C-terminus: MSLKERFISYGYLIRLDKPIGTLLLLWPTLWALWLASSGVLDLSILLIFVAGTFLMRSAGCAINDYADRDFDRHVKRTQGRPVTSGKISAKEAVAVASFLALCAFLLIQPLNAFTKQLSVLALLVAFIYPFTKRFFAMPQTVLGIAFGFGIPMAYAAILDFIPLEAWFLFTGNIFWAIAYDTAYAMVDRDDDLRLGLRTSAITFGQYDVVVIAISYGMLFLSHLWVAQLANLSNYFLVGWFAALACAIYHLKLVSTRNRENCFKAFRHNNWLGGFLFLGIVLGLGVH.

9 consecutive transmembrane segments (helical) span residues 7–27 (FISY…LLLW), 30–50 (LWAL…LIFV), 94–114 (VAVA…LNAF), 118–138 (LSVL…FFAM), 142–162 (VLGI…LDFI), 167–187 (WFLF…YAMV), 209–229 (VVVI…VAQL), 235–255 (YFLV…KLVS), and 266–286 (FRHN…GLGV).

Belongs to the UbiA prenyltransferase family. The cofactor is Mg(2+).

It localises to the cell inner membrane. It carries out the reaction all-trans-octaprenyl diphosphate + 4-hydroxybenzoate = 4-hydroxy-3-(all-trans-octaprenyl)benzoate + diphosphate. It functions in the pathway cofactor biosynthesis; ubiquinone biosynthesis. In terms of biological role, catalyzes the prenylation of para-hydroxybenzoate (PHB) with an all-trans polyprenyl group. Mediates the second step in the final reaction sequence of ubiquinone-8 (UQ-8) biosynthesis, which is the condensation of the polyisoprenoid side chain with PHB, generating the first membrane-bound Q intermediate 3-octaprenyl-4-hydroxybenzoate. This Polynucleobacter necessarius subsp. necessarius (strain STIR1) protein is 4-hydroxybenzoate octaprenyltransferase.